An 864-amino-acid chain; its full sequence is MHEKYVPSDVESAAQGQWRATDAYKTTETADKPKFYCVSMLPYPSGKLHMGHVRNYTINDVMYRYLRMNGYNTLMPMGWDAFGMPAENAAMANGVPPAKWTYDNIAYMKKQMQSMGLAIDWSREVATCSPDYYKWNQWIFLKMLEKGIAYKKTGTVNWDPVDQTVLANEQVIDGRGWRSGALVEKREIPMYYMRITQYADELLNDLDGLGWPERVKVMQQNWIGKSFGVNFGFPYELDGEQKLLRVFTTRADTIMGVTFCAVAAEHPLATRLAQGRPDLQSFIDECKHGGVAEADMATMEKKGMATGFFVTHPLTQEKVEVWIGNYVLMSYGEGAVMGVPAHDERDFAFVKKYGIPVKQVVAVEGETFSTDAWQESYGDKENGVLINSGKYDGLKYGEAVDAIAADLKALGLGEKQVTWRLRDWGISRQRYWGTPIPIIHCPSCGDVPVPEKDLPVVLPEDLVPDGTGNPLAKSEAFLNCTCPTCGAAAKRETDTMDTFVDSSWYFYRYAAPDAKTMVDARTDYWMPMDQYIGGIEHAILHLLYSRFWAKVCRDLGIVKFGEPAKNLLTQGMVLNETYYRENDAGKKTWYNPADVTVTHDDKGRPVGATLNADGQPVVLGGVEKMSKSKNNGVDPQVLIDQYGADTARLFTMFAAPPEQQLEWSGAGVEGASRFLRRVWAFGQANETALTERAPFDAAKLADTEKTLRREIYSVLKQADFDYQRLQYNTVVSAAMKMLNAIEGAKGASAAVLRETYGVLLRVLYPVVPHVTFQLWRELGYEGEFGSLLDAPWPKVDEKALEQSEIELVLQVNGKVRGAVTVAKDASREAIEAVALAHEMFAKFSEGKPAKKVIVVPGRLVNVVV.

The short motif at 42–52 is the 'HIGH' region element; sequence PYPSGKLHMGH. The 'KMSKS' region motif lies at 624–628; it reads KMSKS. Residue Lys627 coordinates ATP.

This sequence belongs to the class-I aminoacyl-tRNA synthetase family.

The protein resides in the cytoplasm. The catalysed reaction is tRNA(Leu) + L-leucine + ATP = L-leucyl-tRNA(Leu) + AMP + diphosphate. This is Leucine--tRNA ligase from Paraburkholderia phymatum (strain DSM 17167 / CIP 108236 / LMG 21445 / STM815) (Burkholderia phymatum).